Here is a 159-residue protein sequence, read N- to C-terminus: MKIRIGHGFDVHKFGGEPPLILGGVTVPYEVGLIAHSDGDVVLHAISDAILGAMALGDIGKHFPDTDAEFKGADSRVLLKHCYQLALNMGFSMSNLDVTVIAQAPKMAPHIEAIRSVIAADLQSDIDDINVKATTTEKLGFTGRKEGIAVEAVVLMTKI.

Positions 10 and 12 each coordinate a divalent metal cation. Residues 10–12 and 36–37 contribute to the 4-CDP-2-C-methyl-D-erythritol 2-phosphate site; these read DVH and HS. His44 contacts a divalent metal cation. 4-CDP-2-C-methyl-D-erythritol 2-phosphate-binding positions include 58-60, 63-67, 102-108, 134-137, Phe141, and Arg144; these read DIG, FPDTD, AQAPKMA, and TTTE.

The protein belongs to the IspF family. Homotrimer. A divalent metal cation serves as cofactor.

The catalysed reaction is 4-CDP-2-C-methyl-D-erythritol 2-phosphate = 2-C-methyl-D-erythritol 2,4-cyclic diphosphate + CMP. It functions in the pathway isoprenoid biosynthesis; isopentenyl diphosphate biosynthesis via DXP pathway; isopentenyl diphosphate from 1-deoxy-D-xylulose 5-phosphate: step 4/6. Involved in the biosynthesis of isopentenyl diphosphate (IPP) and dimethylallyl diphosphate (DMAPP), two major building blocks of isoprenoid compounds. Catalyzes the conversion of 4-diphosphocytidyl-2-C-methyl-D-erythritol 2-phosphate (CDP-ME2P) to 2-C-methyl-D-erythritol 2,4-cyclodiphosphate (ME-CPP) with a corresponding release of cytidine 5-monophosphate (CMP). The polypeptide is 2-C-methyl-D-erythritol 2,4-cyclodiphosphate synthase (Shewanella piezotolerans (strain WP3 / JCM 13877)).